We begin with the raw amino-acid sequence, 670 residues long: Putative segment polarity protein dishevelled homolog DVL1P1 (670 aa).

The DIX domain maps to 1–85 (MAETKIIYHM…RVVSWLVLVE (85 aa)). The tract at residues 89 to 240 (SDAGSQGTDS…ADRASSFSSM (152 aa)) is disordered. A compositionally biased stretch (basic residues) spans 142 to 151 (SHRRDRARRR). The span at 152–171 (NREEAARTNGHPRGDRRRDV) shows a compositional bias: basic and acidic residues. Low complexity-rich tracts occupy residues 176-192 (DSAS…SSFV) and 201-214 (SRLS…TSSR). Residues 215-228 (LIRKHKRRRRKQRL) show a composition bias toward basic residues. Positions 251–323 (TVTLNMERHH…NDDAVRVLRE (73 aa)) constitute a PDZ domain. One can recognise a DEP domain in the interval 400-474 (PDSGLEIRDR…SEQCYYVFGD (75 aa)). Positions 518 to 642 (PGPPPCFPPA…PGGPPVRELA (125 aa)) are disordered. Composition is skewed to low complexity over residues 526-553 (PAYQ…SSGS) and 600-614 (SRGS…SYAP).

It belongs to the DSH family. As to expression, expressed in thymus, heart, liver, kidney, brain, skeletal muscle, and pancreas.

It localises to the cytoplasm. May play a role in the signal transduction pathway mediated by multiple Wnt genes. The sequence is that of Putative segment polarity protein dishevelled homolog DVL1P1 (DVL1P1) from Homo sapiens (Human).